The chain runs to 48 residues: Fimbrial assembly protein, serogroup F1 (48 aa).

This Dichelobacter nodosus (Bacteroides nodosus) protein is Fimbrial assembly protein, serogroup F1 (fimB).